Consider the following 172-residue polypeptide: HTH-type transcriptional regulator IscR (172 aa).

The HTH rrf2-type domain occupies arginine 2 to arginine 131. The H-T-H motif DNA-binding region spans leucine 28–lysine 51. 3 residues coordinate [2Fe-2S] cluster: cysteine 92, cysteine 98, and cysteine 104.

It depends on [2Fe-2S] cluster as a cofactor.

Functionally, regulates the transcription of several operons and genes involved in the biogenesis of Fe-S clusters and Fe-S-containing proteins. This Photobacterium profundum (strain SS9) protein is HTH-type transcriptional regulator IscR.